The chain runs to 513 residues: Lysine--tRNA ligase (513 aa).

Positions 422 and 429 each coordinate Mg(2+).

This sequence belongs to the class-II aminoacyl-tRNA synthetase family. As to quaternary structure, homodimer. Requires Mg(2+) as cofactor.

Its subcellular location is the cytoplasm. The catalysed reaction is tRNA(Lys) + L-lysine + ATP = L-lysyl-tRNA(Lys) + AMP + diphosphate. This chain is Lysine--tRNA ligase, found in Tolumonas auensis (strain DSM 9187 / NBRC 110442 / TA 4).